A 236-amino-acid chain; its full sequence is Alpha-acetolactate decarboxylase (236 aa).

It belongs to the alpha-acetolactate decarboxylase family.

The catalysed reaction is (2S)-2-acetolactate + H(+) = (R)-acetoin + CO2. It functions in the pathway polyol metabolism; (R,R)-butane-2,3-diol biosynthesis; (R,R)-butane-2,3-diol from pyruvate: step 2/3. In terms of biological role, converts acetolactate into acetoin. In Lactococcus lactis subsp. lactis (strain IL1403) (Streptococcus lactis), this protein is Alpha-acetolactate decarboxylase (aldB).